Consider the following 355-residue polypeptide: MSGTGFRYGLNVMKKKKPNESSNRITFTEDDSSSSEQEHAPIPNSFSSQITAASDASKDDNYDASIYGFDEFYDSMKSAEREQMELKRLESKDRRPKYMENLIESAKKRKRDLLLARERALLKKNELEGDDATEKFVTSSYKKHREEVQKAIEDRKEEDEKSITDTTTGMKDFYASMLDRQEKIHQAAVEGVQNSKKTGAEIGDAMKGQDTLGSDNLILEAKKKGLKLELNDNNEIVDQRQILTAGLNIRKSSANNSMRDDKKRNHKSSYKRSLSPSTRYHQDRPDKRHGTYSLEEIDKQRKEFENRQRLQKEKEFQKSREAALKIHASRNTTETQVQSARERYLQRKKKAATNP.

The tract at residues 1–57 (MSGTGFRYGLNVMKKKKPNESSNRITFTEDDSSSSEQEHAPIPNSFSSQITAASDAS) is disordered. The span at 44 to 54 (NSFSSQITAAS) shows a compositional bias: polar residues. Residues 99–162 (MENLIESAKK…EDRKEEDEKS (64 aa)) are a coiled coil. Disordered regions lie at residues 253 to 292 (SANNSMRDDKKRNHKSSYKRSLSPSTRYHQDRPDKRHGTY) and 325 to 355 (KIHASRNTTETQVQSARERYLQRKKKAATNP). Basic and acidic residues predominate over residues 280 to 289 (YHQDRPDKRH). Positions 293 to 326 (SLEEIDKQRKEFENRQRLQKEKEFQKSREAALKI) form a coiled coil. Over residues 329-339 (SRNTTETQVQS) the composition is skewed to polar residues. Basic residues predominate over residues 346 to 355 (QRKKKAATNP).

Belongs to the NSRP1 family.

This chain is Nuclear speckle splicing regulatory protein 1 homolog, found in Schizosaccharomyces pombe (strain 972 / ATCC 24843) (Fission yeast).